Consider the following 248-residue polypeptide: Gas vesicle protein J (248 aa).

A 1; truncated repeat occupies 121-140 (DVKDDLYQTSAKIPSPVDTP). The 6 X 21 AA approximate tandem repeats stretch occupies residues 121 to 245 (DVKDDLYQTS…EEIPSSVDPA (125 aa)). Tandem repeats lie at residues 141–161 (IEVLDFQAQSSGGTPPYVNTS), 162–182 (MEILDFQAQTSAESSSPVGST), 183–203 (VEILDFQAQTSEESSSPVVST), 204–224 (VEILDFQAQTSEESSSPVGST), and 225–245 (VEILDFQAQTSEEIPSSVDPA).

This sequence belongs to the gas vesicle GvpA family. In terms of assembly, interacts with GvpA.

The protein localises to the gas vesicle. In terms of biological role, a minor component of the gas vesicle, might be involved in nucleating gas vesicle formation. Gas vesicles (GV) are hollow, gas filled proteinaceous nanostructures. During planktonic growth they allow positioning of the organism at a favorable depth for light or nutrient acquisition. This is Gas vesicle protein J from Dolichospermum flosaquae (Anabaena flos-aquae).